The chain runs to 182 residues: ADP-ribosylation factor 1 (182 aa).

Residue Gly2 is the site of N-myristoyl glycine attachment. Positions 3 to 16 (NVFANLFKGLFGKK) are important for the stable binding to the membranes. GTP-binding positions include 24-32 (GLDAAGKTT), 126-129 (NKQD), and Ala160.

It belongs to the small GTPase superfamily. Arf family.

Its subcellular location is the golgi apparatus membrane. It localises to the cytoplasm. It is found in the cytosol. It catalyses the reaction GTP + H2O = GDP + phosphate + H(+). Its activity is regulated as follows. Alternates between an inactive GDP-bound form and an active GTP-bound form. Activated by a guanine nucleotide-exchange factor (GEF) and inactivated by GTPase-activating protein (GAP). Its function is as follows. Small GTPase involved in protein trafficking between different compartments. Modulates vesicle budding and uncoating within the Golgi complex. In its GTP-bound form, triggers the recruitment of coatomer proteins to the Golgi membrane. The hydrolysis of ARF1-bound GTP, which is mediated by ARFGAPs proteins, is required for dissociation of coat proteins from Golgi membranes and vesicles. Has a role in eye development. Required for cleavage furrow ingression in embryonic cells. The protein is ADP-ribosylation factor 1 of Drosophila melanogaster (Fruit fly).